The chain runs to 256 residues: DNA repair protein RecO (256 aa).

This sequence belongs to the RecO family.

In terms of biological role, involved in DNA repair and RecF pathway recombination. This is DNA repair protein RecO from Pelotomaculum thermopropionicum (strain DSM 13744 / JCM 10971 / SI).